The following is a 525-amino-acid chain: uncharacterized protein (525 aa).

2 helical membrane-spanning segments follow: residues 28–48 (FIDV…NLII) and 353–373 (GVNA…LFTP). Residues 146–394 (DIKIGKLKVG…ELKIASKMMF (249 aa)) enclose the Pterin-binding domain.

Its subcellular location is the cell membrane. Functionally, unknown. Does not possess dihydropteroate synthase (DHPS) activity since it does not catalyze the condensation of 6-hydroxymethyl-7,8-dihydropterin pyrophosphate (DHPP) and 4-aminobenzoate to form 7,8-dihydropteroate. This is an uncharacterized protein from Methanocaldococcus jannaschii (strain ATCC 43067 / DSM 2661 / JAL-1 / JCM 10045 / NBRC 100440) (Methanococcus jannaschii).